We begin with the raw amino-acid sequence, 763 residues long: DEK domain-containing chromatin-associated protein 3 (763 aa).

Disordered regions lie at residues Met1 to Lys324 and Thr458 to Val681. Polar residues predominate over residues Pro11 to Glu20. Composition is skewed to basic and acidic residues over residues Ala32–Glu44, Ser72–Gly97, Thr124–Gly172, and Asp180–Asp242. A coiled-coil region spans residues Lys60–Glu96. A coiled-coil region spans residues Gly214 to Arg286. Residues Glu243–Asp252 show a composition bias toward acidic residues. Over residues Asn253–Asp264 the composition is skewed to basic and acidic residues. A compositionally biased stretch (acidic residues) spans Glu265–Lys277. A Nuclear localization signal 1 motif is present at residues Lys284–Ser291. Residues Lys295 to Pro311 show a composition bias toward basic and acidic residues. The segment covering Lys475–Lys484 has biased composition (basic residues). A Nuclear localization signal 2 motif is present at residues Pro483–Ala490. Residues Lys485–Lys496 show a composition bias toward low complexity. Residues Lys513 to Asn551 adopt a coiled-coil conformation. Positions Asp521–Gln533 are enriched in acidic residues. The span at Glu534 to Glu547 shows a compositional bias: basic and acidic residues. Positions Ser557–Glu578 are enriched in acidic residues. Composition is skewed to low complexity over residues Ala606 to Pro615 and Pro650 to Ser660. Residues Ala661–Val681 are compositionally biased toward basic and acidic residues. The region spanning Lys676–Thr731 is the DEK-C domain. DNA-binding regions lie at residues Asp694–Ala708 and Lys723–Gln727. Residues Lys723–Gly753 adopt a coiled-coil conformation. Residues Leu730–Ala763 are disordered. Gly residues predominate over residues Gly753–Ala763.

Found in a mRNA splicing-dependent exon junction complex (EJC). Binds specifically histones H3 and H4. Interacts with TOP1A, SCC3, At1g61730, At1g20940, At1g13930, DEK4, HDT1, NIT1, SHL, CYP19-1, GEBPL, HSP70-3, PDP2, PDP3, KIN2, RPL11A and PDS5A. In terms of tissue distribution, highly expressed in young seedlings.

It localises to the nucleus. The protein localises to the nucleolus. Its function is as follows. Chromatin-associated protein which contributes to the modulation of chromatin structure (such as super-helical structure of DNA) and function. Binds to chromatin of protein-coding genes throughout the genome to regulate nucleosome occupancy and chromatin accessibility, and to modulate the expression of target genes. Negative regulator of stress tolerance (e.g. high salt). The chain is DEK domain-containing chromatin-associated protein 3 from Arabidopsis thaliana (Mouse-ear cress).